The sequence spans 257 residues: MGRRTLSQRKGRGSIFKSRSHHKLGVAQHRAIDFFERHSTVRGLVKSIEHDPGRGAPLARVVFRNPRQYGLDKELFICAEGLYSGQYIYCGSKASLHIGNVLPIGQCPEGTVVCNVESKPGDRGIIARASGNYATVISHNADNETTRIRLPSGAKKTLKSNCRAMVGIIAGGGRTEKPILKAGVAYRMYKAKRTTWPRVRGVAMNPVDHPHGGGNHQHVGHPTTLKRSSPPGQKAGKVAARRTGLIRGGNKEGAADN.

The interval 207 to 257 (VDHPHGGGNHQHVGHPTTLKRSSPPGQKAGKVAARRTGLIRGGNKEGAADN) is disordered.

The protein belongs to the universal ribosomal protein uL2 family. In terms of assembly, component of the large ribosomal subunit.

It localises to the cytoplasm. Component of the large ribosomal subunit. The ribosome is a large ribonucleoprotein complex responsible for the synthesis of proteins in the cell. This Entamoeba histolytica (strain ATCC 30459 / HM-1:IMSS / ABRM) protein is Large ribosomal subunit protein uL2 (RPL8).